We begin with the raw amino-acid sequence, 277 residues long: Thiazole synthase (277 aa).

The active-site Schiff-base intermediate with DXP is the lysine 118. Residues glycine 179, 205–206 (AG), and 227–228 (NT) each bind 1-deoxy-D-xylulose 5-phosphate.

It belongs to the ThiG family. Homotetramer. Forms heterodimers with either ThiH or ThiS.

It is found in the plastid. It localises to the chloroplast. The enzyme catalyses [ThiS sulfur-carrier protein]-C-terminal-Gly-aminoethanethioate + 2-iminoacetate + 1-deoxy-D-xylulose 5-phosphate = [ThiS sulfur-carrier protein]-C-terminal Gly-Gly + 2-[(2R,5Z)-2-carboxy-4-methylthiazol-5(2H)-ylidene]ethyl phosphate + 2 H2O + H(+). The protein operates within cofactor biosynthesis; thiamine diphosphate biosynthesis. Catalyzes the rearrangement of 1-deoxy-D-xylulose 5-phosphate (DXP) to produce the thiazole phosphate moiety of thiamine. Sulfur is provided by the thiocarboxylate moiety of the carrier protein ThiS. In vitro, sulfur can be provided by H(2)S. The polypeptide is Thiazole synthase (Emiliania huxleyi (Coccolithophore)).